The sequence spans 561 residues: Embryonal Fyn-associated substrate (561 aa).

In terms of domain architecture, SH3 spans 5 to 68 (TSTQLARALY…PANRVKLLPA (64 aa)). 4 disordered regions span residues 68–123 (AGPA…CPPS), 171–215 (HPLT…PGPP), 240–372 (LADG…HNEY), and 390–422 (DKAQGSRPPDQACTGDPELPERGMPAPQEALSP). Residues 103-123 (VPPPARPCPTSGPPAGPCPPS) show a composition bias toward pro residues. Y253 carries the phosphotyrosine; by SRC modification. Short sequence motifs (SH3-binding) lie at residues 305–311 (RPLPALP) and 335–341 (RPLPPPP). A compositionally biased stretch (pro residues) spans 308–325 (PALPVPEAPSPSPVPSPA). Over residues 352 to 372 (VEGDPEGREMEDDPAGHHNEY) the composition is skewed to basic and acidic residues. A divergent helix-loop-helix motif region spans residues 438–488 (FYAGQCQSHYSALQAAVAALMSSTQANQPPRLFVPHSKRVVVAAHRLVFVG).

It belongs to the CAS family. Post-translationally, phosphorylated on multiple tyrosine residues. Phosphorylated on tyrosines by FYN and SRC. In terms of tissue distribution, the protein has been detected in lung and placenta.

Docking protein which plays a central coordinating role for tyrosine-kinase-based signaling related to cell adhesion. May serve as an activator of SRC and a downstream effector. Interacts with the SH3 domain of FYN and with CRK, SRC, and YES. The sequence is that of Embryonal Fyn-associated substrate (EFS) from Homo sapiens (Human).